Reading from the N-terminus, the 240-residue chain is Putative truncated effector protein hopW1-2 (240 aa).

The disordered stretch occupies residues 1 to 32 (MSPAQIIRTSHSFPPSFTGTSSSAENSHAQSP). Positions 9 to 23 (TSHSFPPSFTGTSSS) are enriched in low complexity.

Belongs to the HopW family.

This is Putative truncated effector protein hopW1-2 (hopW1-2) from Pseudomonas syringae pv. maculicola.